Reading from the N-terminus, the 258-residue chain is Imidazole glycerol phosphate synthase subunit HisF (258 aa).

Residues D12 and D131 contribute to the active site.

Belongs to the HisA/HisF family. Heterodimer of HisH and HisF.

The protein resides in the cytoplasm. It carries out the reaction 5-[(5-phospho-1-deoxy-D-ribulos-1-ylimino)methylamino]-1-(5-phospho-beta-D-ribosyl)imidazole-4-carboxamide + L-glutamine = D-erythro-1-(imidazol-4-yl)glycerol 3-phosphate + 5-amino-1-(5-phospho-beta-D-ribosyl)imidazole-4-carboxamide + L-glutamate + H(+). It functions in the pathway amino-acid biosynthesis; L-histidine biosynthesis; L-histidine from 5-phospho-alpha-D-ribose 1-diphosphate: step 5/9. Its function is as follows. IGPS catalyzes the conversion of PRFAR and glutamine to IGP, AICAR and glutamate. The HisF subunit catalyzes the cyclization activity that produces IGP and AICAR from PRFAR using the ammonia provided by the HisH subunit. This chain is Imidazole glycerol phosphate synthase subunit HisF, found in Nocardioides sp. (strain ATCC BAA-499 / JS614).